The primary structure comprises 125 residues: Large ribosomal subunit protein bL12 (125 aa).

It belongs to the bacterial ribosomal protein bL12 family. Homodimer. Part of the ribosomal stalk of the 50S ribosomal subunit. Forms a multimeric L10(L12)X complex, where L10 forms an elongated spine to which 2 to 4 L12 dimers bind in a sequential fashion. Binds GTP-bound translation factors.

Functionally, forms part of the ribosomal stalk which helps the ribosome interact with GTP-bound translation factors. Is thus essential for accurate translation. This chain is Large ribosomal subunit protein bL12, found in Ruegeria sp. (strain TM1040) (Silicibacter sp.).